We begin with the raw amino-acid sequence, 612 residues long: Dihydroxy-acid dehydratase (612 aa).

D81 serves as a coordination point for Mg(2+). Residue C122 participates in [2Fe-2S] cluster binding. Positions 123 and 124 each coordinate Mg(2+). Residue K124 is modified to N6-carboxylysine. C195 is a [2Fe-2S] cluster binding site. Mg(2+) is bound at residue E491. S517 functions as the Proton acceptor in the catalytic mechanism.

This sequence belongs to the IlvD/Edd family. Homodimer. [2Fe-2S] cluster is required as a cofactor. Mg(2+) serves as cofactor.

It catalyses the reaction (2R)-2,3-dihydroxy-3-methylbutanoate = 3-methyl-2-oxobutanoate + H2O. The catalysed reaction is (2R,3R)-2,3-dihydroxy-3-methylpentanoate = (S)-3-methyl-2-oxopentanoate + H2O. It participates in amino-acid biosynthesis; L-isoleucine biosynthesis; L-isoleucine from 2-oxobutanoate: step 3/4. Its pathway is amino-acid biosynthesis; L-valine biosynthesis; L-valine from pyruvate: step 3/4. Functions in the biosynthesis of branched-chain amino acids. Catalyzes the dehydration of (2R,3R)-2,3-dihydroxy-3-methylpentanoate (2,3-dihydroxy-3-methylvalerate) into 2-oxo-3-methylpentanoate (2-oxo-3-methylvalerate) and of (2R)-2,3-dihydroxy-3-methylbutanoate (2,3-dihydroxyisovalerate) into 2-oxo-3-methylbutanoate (2-oxoisovalerate), the penultimate precursor to L-isoleucine and L-valine, respectively. The polypeptide is Dihydroxy-acid dehydratase (Haemophilus influenzae (strain PittEE)).